We begin with the raw amino-acid sequence, 185 residues long: Ribosome-recycling factor (185 aa).

It belongs to the RRF family.

The protein localises to the cytoplasm. Functionally, responsible for the release of ribosomes from messenger RNA at the termination of protein biosynthesis. May increase the efficiency of translation by recycling ribosomes from one round of translation to another. This chain is Ribosome-recycling factor, found in Bacillus cereus (strain B4264).